Here is a 592-residue protein sequence, read N- to C-terminus: A-type ATP synthase subunit A (592 aa).

An ATP-binding site is contributed by 231 to 238; it reads GGFGTGKT.

The protein belongs to the ATPase alpha/beta chains family. In terms of assembly, has multiple subunits with at least A(3), B(3), C, D, E, F, H, I and proteolipid K(x).

It is found in the cell membrane. It carries out the reaction ATP + H2O + 4 H(+)(in) = ADP + phosphate + 5 H(+)(out). Functionally, component of the A-type ATP synthase that produces ATP from ADP in the presence of a proton gradient across the membrane. The A chain is the catalytic subunit. This chain is A-type ATP synthase subunit A, found in Staphylothermus marinus (strain ATCC 43588 / DSM 3639 / JCM 9404 / F1).